Reading from the N-terminus, the 120-residue chain is Large ribosomal subunit protein uL18 (120 aa).

The protein belongs to the universal ribosomal protein uL18 family. As to quaternary structure, part of the 50S ribosomal subunit; part of the 5S rRNA/L5/L18/L25 subcomplex. Contacts the 5S and 23S rRNAs.

In terms of biological role, this is one of the proteins that bind and probably mediate the attachment of the 5S RNA into the large ribosomal subunit, where it forms part of the central protuberance. The polypeptide is Large ribosomal subunit protein uL18 (Gluconobacter oxydans (strain 621H) (Gluconobacter suboxydans)).